Consider the following 238-residue polypeptide: Phosphatidylcholine synthase (238 aa).

Residues 1–16 (MPVNLSMTPINKAKAW) lie on the Cytoplasmic side of the membrane. A helical membrane pass occupies residues 17–37 (GVHAVTASGVILALLALLALV). Over 38 to 41 (DNKP) the chain is Periplasmic. Residues 42 to 62 (QACLLWLGLALLVDGLDGTLA) form a helical membrane-spanning segment. Over 63–75 (RKYEVKEMLPHFD) the chain is Cytoplasmic. Residues 76–96 (GSVLDLVIDYLTYVFIPAIFI) form a helical membrane-spanning segment. Over 97 to 104 (YRYIPLPE) the chain is Periplasmic. A helical membrane pass occupies residues 105 to 125 (HFELLAVGVILVSSLFCFCNV). The Cytoplasmic segment spans residues 126–132 (NMKSTDN). A helical transmembrane segment spans residues 133-153 (YFVGFPAAWNVVAVYFYVLDL). Over 154–155 (HP) the chain is Periplasmic. The helical transmembrane segment at 156–176 (WVNLATVLVLAALTLTRMKFL) threads the bilayer. Topologically, residues 177–183 (HPFRVRQ) are cytoplasmic. The helical transmembrane segment at 184–204 (FMPLNIAVTFVWLISSGLLIV) threads the bilayer. The Periplasmic segment spans residues 205–209 (QQPAD). The helical transmembrane segment at 210-230 (LPILLGLWFAASAYFVGICLW) threads the bilayer. The Cytoplasmic portion of the chain corresponds to 231–238 (RSAREWFG).

Belongs to the CDP-alcohol phosphatidyltransferase class-I family. Mn(2+) serves as cofactor.

The protein localises to the cell inner membrane. It carries out the reaction a CDP-1,2-diacyl-sn-glycerol + choline = a 1,2-diacyl-sn-glycero-3-phosphocholine + CMP + H(+). Functionally, condenses choline with CDP-diglyceride to produce phosphatidylcholine and CMP. This is Phosphatidylcholine synthase from Pseudomonas aeruginosa (strain ATCC 15692 / DSM 22644 / CIP 104116 / JCM 14847 / LMG 12228 / 1C / PRS 101 / PAO1).